A 593-amino-acid polypeptide reads, in one-letter code: Arginine--tRNA ligase (593 aa).

A 'HIGH' region motif is present at residues 138–148 (ANPTGPLHVGH).

Belongs to the class-I aminoacyl-tRNA synthetase family. As to quaternary structure, monomer.

The protein resides in the cytoplasm. It carries out the reaction tRNA(Arg) + L-arginine + ATP = L-arginyl-tRNA(Arg) + AMP + diphosphate. The chain is Arginine--tRNA ligase from Burkholderia lata (strain ATCC 17760 / DSM 23089 / LMG 22485 / NCIMB 9086 / R18194 / 383).